Reading from the N-terminus, the 685-residue chain is Glycine--tRNA ligase beta subunit (685 aa).

It belongs to the class-II aminoacyl-tRNA synthetase family. Tetramer of two alpha and two beta subunits.

The protein localises to the cytoplasm. It catalyses the reaction tRNA(Gly) + glycine + ATP = glycyl-tRNA(Gly) + AMP + diphosphate. In Azotobacter vinelandii (strain DJ / ATCC BAA-1303), this protein is Glycine--tRNA ligase beta subunit.